Consider the following 268-residue polypeptide: Tryptophan synthase alpha chain (268 aa).

Residues glutamate 49 and aspartate 60 each act as proton acceptor in the active site.

Belongs to the TrpA family. Tetramer of two alpha and two beta chains.

The catalysed reaction is (1S,2R)-1-C-(indol-3-yl)glycerol 3-phosphate + L-serine = D-glyceraldehyde 3-phosphate + L-tryptophan + H2O. Its pathway is amino-acid biosynthesis; L-tryptophan biosynthesis; L-tryptophan from chorismate: step 5/5. The alpha subunit is responsible for the aldol cleavage of indoleglycerol phosphate to indole and glyceraldehyde 3-phosphate. In Escherichia coli O7:K1 (strain IAI39 / ExPEC), this protein is Tryptophan synthase alpha chain.